A 499-amino-acid chain; its full sequence is Ethanolamine-phosphate phospho-lyase (499 aa).

Lysine 278 carries the post-translational modification N6-(pyridoxal phosphate)lysine. Positions arginine 468–serine 479 are enriched in basic and acidic residues. The disordered stretch occupies residues arginine 468–threonine 499.

This sequence belongs to the class-III pyridoxal-phosphate-dependent aminotransferase family. In terms of assembly, homotetramer. Requires pyridoxal 5'-phosphate as cofactor.

It is found in the mitochondrion. It carries out the reaction phosphoethanolamine + H2O = acetaldehyde + NH4(+) + phosphate. Functionally, catalyzes the pyridoxal-phosphate-dependent breakdown of phosphoethanolamine, converting it to ammonia, inorganic phosphate and acetaldehyde. The protein is Ethanolamine-phosphate phospho-lyase (ETNPPL) of Homo sapiens (Human).